The sequence spans 145 residues: Large ribosomal subunit protein bL9 (145 aa).

The protein belongs to the bacterial ribosomal protein bL9 family.

Functionally, binds to the 23S rRNA. The polypeptide is Large ribosomal subunit protein bL9 (Mesomycoplasma hyopneumoniae (strain J / ATCC 25934 / NCTC 10110) (Mycoplasma hyopneumoniae)).